The following is a 297-amino-acid chain: Cell division protein ZipA (297 aa).

Met-1 is a topological domain (periplasmic). The chain crosses the membrane as a helical span at residues 2–22 (EIGLREWLILIGIIVIAGILF). Residues 23–297 (DGWRRMRGGK…FERRALTQKR (275 aa)) lie on the Cytoplasmic side of the membrane. The interval 48-151 (DEEGGSAEVL…AAPASNSVKE (104 aa)) is disordered. Basic and acidic residues predominate over residues 83-92 (ARDREREPKP). Over residues 124-133 (LFSDSDDDFA) the composition is skewed to acidic residues.

It belongs to the ZipA family. In terms of assembly, interacts with FtsZ via their C-terminal domains.

The protein resides in the cell inner membrane. Essential cell division protein that stabilizes the FtsZ protofilaments by cross-linking them and that serves as a cytoplasmic membrane anchor for the Z ring. Also required for the recruitment to the septal ring of downstream cell division proteins. This is Cell division protein ZipA from Pseudomonas putida (strain ATCC 47054 / DSM 6125 / CFBP 8728 / NCIMB 11950 / KT2440).